A 171-amino-acid polypeptide reads, in one-letter code: Ribosome maturation factor RimM (171 aa).

Residues 96 to 170 form the PRC barrel domain; the sequence is AEGEYYYHEI…LVTIHVMEGL (75 aa).

This sequence belongs to the RimM family. Binds ribosomal protein uS19.

Its subcellular location is the cytoplasm. An accessory protein needed during the final step in the assembly of 30S ribosomal subunit, possibly for assembly of the head region. Essential for efficient processing of 16S rRNA. May be needed both before and after RbfA during the maturation of 16S rRNA. It has affinity for free ribosomal 30S subunits but not for 70S ribosomes. The polypeptide is Ribosome maturation factor RimM (Bacillus cereus (strain G9842)).